The primary structure comprises 131 residues: Maturin (131 aa).

Position 34 is a phosphotyrosine (Y34). Residues F107–E120 are compositionally biased toward acidic residues. The tract at residues F107–Q131 is disordered.

Belongs to the MTURN family. Post-translationally, phosphorylation at Tyr-34 is essential for its ability to promote megakaryocyte differentiation.

The protein localises to the cytoplasm. Functionally, promotes megakaryocyte differentiation by enhancing ERK and JNK signaling as well as up-regulating RUNX1 and FLI1 expression. Represses NF-kappa-B transcriptional activity by inhibiting phosphorylation of RELA at 'Ser- 536'. May be involved in early neuronal development. The sequence is that of Maturin (Mturn) from Rattus norvegicus (Rat).